Reading from the N-terminus, the 368-residue chain is Histidinol-phosphate aminotransferase (368 aa).

The residue at position 228 (K228) is an N6-(pyridoxal phosphate)lysine.

It belongs to the class-II pyridoxal-phosphate-dependent aminotransferase family. Histidinol-phosphate aminotransferase subfamily. As to quaternary structure, homodimer. Pyridoxal 5'-phosphate serves as cofactor.

It catalyses the reaction L-histidinol phosphate + 2-oxoglutarate = 3-(imidazol-4-yl)-2-oxopropyl phosphate + L-glutamate. It participates in amino-acid biosynthesis; L-histidine biosynthesis; L-histidine from 5-phospho-alpha-D-ribose 1-diphosphate: step 7/9. The sequence is that of Histidinol-phosphate aminotransferase (hisC) from Methylobacillus flagellatus.